Reading from the N-terminus, the 135-residue chain is Large ribosomal subunit protein uL16c (135 aa).

Positions 1–17 (MLSPKRTKFRKQHRNRM) are enriched in basic residues. The segment at 1-22 (MLSPKRTKFRKQHRNRMNGKAS) is disordered.

It belongs to the universal ribosomal protein uL16 family. As to quaternary structure, part of the 50S ribosomal subunit.

It is found in the plastid. The protein localises to the chloroplast. This is Large ribosomal subunit protein uL16c from Gracilaria tenuistipitata (Red alga).